Consider the following 637-residue polypeptide: Probable potassium transport system protein Kup (637 aa).

Transmembrane regions (helical) follow at residues 25-45, 62-82, 115-135, 149-169, 180-200, 227-247, 263-283, 295-315, 352-372, 378-398, 410-430, and 434-454; these read ISLA…LYAI, VLGV…LKYL, WFLV…GMIT, IIAP…LTGL, VGAL…VLGL, LQGF…EALY, ILFV…LLLF, LVPS…TIIA, IYVP…VIGF, LAAA…ILFY, LATN…FGAS, and LFHG…LMLT.

This sequence belongs to the HAK/KUP transporter (TC 2.A.72) family.

Its subcellular location is the cell inner membrane. The enzyme catalyses K(+)(in) + H(+)(in) = K(+)(out) + H(+)(out). Its function is as follows. Transport of potassium into the cell. Likely operates as a K(+):H(+) symporter. This chain is Probable potassium transport system protein Kup, found in Chlorobium phaeobacteroides (strain DSM 266 / SMG 266 / 2430).